The chain runs to 436 residues: RNA-binding motif, single-stranded-interacting protein 3 (436 aa).

Residues 28-56 (APAPHPMAPPSPSTNSSSNNSSNNSSGEQ) form a disordered region. Positions 30 to 39 (APHPMAPPSP) are enriched in pro residues. Low complexity predominate over residues 40–53 (STNSSSNNSSNNSS). RRM domains are found at residues 60–133 (TNLY…MAKQ) and 139–224 (TNLY…FADG). Over residues 398-421 (TSPQTVAPSSQDTSGQQQQIAVDT) the composition is skewed to polar residues. Residues 398–436 (TSPQTVAPSSQDTSGQQQQIAVDTSNEHAPAYSYQQSKP) form a disordered region.

Its subcellular location is the cytoplasm. In terms of biological role, binds poly(A) and poly(U) oligoribonucleotides. In Pongo abelii (Sumatran orangutan), this protein is RNA-binding motif, single-stranded-interacting protein 3 (RBMS3).